The primary structure comprises 650 residues: Pentatricopeptide repeat-containing protein At1g51965, mitochondrial (650 aa).

The transit peptide at 1-23 directs the protein to the mitochondrion; the sequence is MKLLRRRFFNSVNTITRPNRRHY. PPR repeat units follow at residues 132–169, 170–200, 202–236, 237–267, 269–303, 304–338, 339–369, 371–405, 406–440, 441–475, 476–510, 511–545, 546–580, and 581–615; these read DPFL…NVHG, NIST…WDLK, NSFT…GHKL, DIFA…RHCR, DEYT…GLTL, NVVG…GCRP, NEYT…SKRY, TQGI…PVKG, ERDS…GVVT, DTMM…GPSP, DIFT…DCKP, DIIS…GLNP, DVVT…GCQP, and NIVT…GLTP.

Belongs to the PPR family. P subfamily.

Its subcellular location is the mitochondrion. The polypeptide is Pentatricopeptide repeat-containing protein At1g51965, mitochondrial (Arabidopsis thaliana (Mouse-ear cress)).